Consider the following 457-residue polypeptide: Argininosuccinate lyase (457 aa).

Belongs to the lyase 1 family. Argininosuccinate lyase subfamily.

It localises to the cytoplasm. The catalysed reaction is 2-(N(omega)-L-arginino)succinate = fumarate + L-arginine. It participates in amino-acid biosynthesis; L-arginine biosynthesis; L-arginine from L-ornithine and carbamoyl phosphate: step 3/3. The protein is Argininosuccinate lyase of Psychrobacter arcticus (strain DSM 17307 / VKM B-2377 / 273-4).